The following is a 452-amino-acid chain: Phosphatidate cytidylyltransferase, mitochondrial (452 aa).

Belongs to the TAM41 family. Mg(2+) is required as a cofactor.

The protein localises to the mitochondrion inner membrane. It carries out the reaction a 1,2-diacyl-sn-glycero-3-phosphate + CTP + H(+) = a CDP-1,2-diacyl-sn-glycerol + diphosphate. The protein operates within phospholipid metabolism; CDP-diacylglycerol biosynthesis; CDP-diacylglycerol from sn-glycerol 3-phosphate: step 3/3. Catalyzes the conversion of phosphatidic acid (PA) to CDP-diacylglycerol (CDP-DAG), an essential intermediate in the synthesis of phosphatidylglycerol, cardiolipin and phosphatidylinositol. The sequence is that of Phosphatidate cytidylyltransferase, mitochondrial (TAMM41) from Homo sapiens (Human).